The sequence spans 196 residues: UPF0314 protein Oant_0840 (196 aa).

Transmembrane regions (helical) follow at residues 15 to 35 (WGLG…WLYF), 65 to 85 (WYTL…TVIA), 127 to 147 (FGDS…GFLI), and 151 to 171 (LPTK…LIVI).

Belongs to the UPF0314 family.

It localises to the cell membrane. The protein is UPF0314 protein Oant_0840 of Brucella anthropi (strain ATCC 49188 / DSM 6882 / CCUG 24695 / JCM 21032 / LMG 3331 / NBRC 15819 / NCTC 12168 / Alc 37) (Ochrobactrum anthropi).